The chain runs to 352 residues: (2E,6E)-farnesyl diphosphate synthase (352 aa).

Residues Lys43, Arg46, and His77 each contribute to the isopentenyl diphosphate site. The Mg(2+) site is built by Asp84 and Asp88. The DDXXD motif signature appears at 84–88; that stretch reads DDLID. Arg94 serves as a coordination point for isopentenyl diphosphate. The short motif at 236–240 is the DDXXD motif element; the sequence is DDVLG.

This sequence belongs to the FPP/GGPP synthase family. Mg(2+) is required as a cofactor.

It catalyses the reaction isopentenyl diphosphate + dimethylallyl diphosphate = (2E)-geranyl diphosphate + diphosphate. The enzyme catalyses isopentenyl diphosphate + (2E)-geranyl diphosphate = (2E,6E)-farnesyl diphosphate + diphosphate. It functions in the pathway isoprenoid biosynthesis; geranyl diphosphate biosynthesis; geranyl diphosphate from dimethylallyl diphosphate and isopentenyl diphosphate: step 1/1. It participates in isoprenoid biosynthesis; farnesyl diphosphate biosynthesis; farnesyl diphosphate from geranyl diphosphate and isopentenyl diphosphate. Catalyzes the sequential condensations of isopentenyl pyrophosphate (IPP) with dimethylallyl diphosphate (DMAPP) to yield geranyl diphosphate (GPP) and with GPP to yield (2E,6E)-farnesyl diphosphate (E,E-FPP). The chain is (2E,6E)-farnesyl diphosphate synthase from Mycobacterium tuberculosis (strain ATCC 25618 / H37Rv).